The chain runs to 1342 residues: DNA-directed RNA polymerase subunit beta (1342 aa).

2 positions are modified to N6-acetyllysine: Lys1022 and Lys1200.

This sequence belongs to the RNA polymerase beta chain family. The RNAP catalytic core consists of 2 alpha, 1 beta, 1 beta' and 1 omega subunit. When a sigma factor is associated with the core the holoenzyme is formed, which can initiate transcription.

It carries out the reaction RNA(n) + a ribonucleoside 5'-triphosphate = RNA(n+1) + diphosphate. Functionally, DNA-dependent RNA polymerase catalyzes the transcription of DNA into RNA using the four ribonucleoside triphosphates as substrates. The protein is DNA-directed RNA polymerase subunit beta of Escherichia coli O6:K15:H31 (strain 536 / UPEC).